A 133-amino-acid chain; its full sequence is MATSRRVSRVSSLIKREVSQMLLHEIKDDRVGTGMVSVTEVEVSGDLQHAKIFVSIYGSPEAKASTMAGLHSAAPFVRRELGQRMRLRRTPEVSFLEDRSLERGDKILNLLNNLPQAIATEDLEDDDSGLALD.

This sequence belongs to the RbfA family. Monomer. Binds 30S ribosomal subunits, but not 50S ribosomal subunits or 70S ribosomes.

The protein resides in the cytoplasm. One of several proteins that assist in the late maturation steps of the functional core of the 30S ribosomal subunit. Associates with free 30S ribosomal subunits (but not with 30S subunits that are part of 70S ribosomes or polysomes). Required for efficient processing of 16S rRNA. May interact with the 5'-terminal helix region of 16S rRNA. This chain is Ribosome-binding factor A, found in Synechocystis sp. (strain ATCC 27184 / PCC 6803 / Kazusa).